Consider the following 476-residue polypeptide: ATP synthase subunit beta (476 aa).

154 to 161 (GGAGVGKT) contributes to the ATP binding site.

It belongs to the ATPase alpha/beta chains family. As to quaternary structure, F-type ATPases have 2 components, CF(1) - the catalytic core - and CF(0) - the membrane proton channel. CF(1) has five subunits: alpha(3), beta(3), gamma(1), delta(1), epsilon(1). CF(0) has four main subunits: a(1), b(1), b'(1) and c(9-12).

Its subcellular location is the cell inner membrane. It catalyses the reaction ATP + H2O + 4 H(+)(in) = ADP + phosphate + 5 H(+)(out). Its function is as follows. Produces ATP from ADP in the presence of a proton gradient across the membrane. The catalytic sites are hosted primarily by the beta subunits. This chain is ATP synthase subunit beta, found in Rhodopseudomonas palustris (strain BisB5).